The following is a 142-amino-acid chain: Movement protein (142 aa).

The segment at 1 to 142 (MDLPEDQARF…LDRSESLSRY (142 aa)) is disordered. 2 stretches are compositionally biased toward polar residues: residues 9–22 (RFTNSYSLRTTSME) and 33–43 (LYQSASRSQMA). A compositionally biased stretch (low complexity) spans 50–62 (SIISRTSSWRTSP). Polar residues-rich tracts occupy residues 74–95 (MNSILTSRTQQSSPKLTNSASP) and 113–124 (TTLQRTNSGFST). Positions 125-142 (KETEMPRLLDRSESLSRY) are enriched in basic and acidic residues.

The protein belongs to the luteoviruses movement protein family.

Transports viral genome to neighboring plant cells directly through plasmosdesmata, without any budding. The movement protein allows efficient cell to cell propagation, by bypassing the host cell wall barrier. The sequence is that of Movement protein from Cicer arietinum (Chickpea).